Reading from the N-terminus, the 317-residue chain is MQPYTKNWTQVTEFVMMGFAGIHEAHLLFFILFLTMYLFTLVENLAIILVVGLDHRLRRPMYFFLTHLSCLEIWYTSVTVPKMLAGFIGVDGGKNISYADCLSQLFIFTFLGATECFLLAAMAYDRYVAICMPLHYGAFVSWGTCIRLAAACWLVGFLTPILPIYLLSQLTFYGPNVIDHFSCDASPLLALSCSDVTWKETVDFLVSLAVLLASSMVIAVSYGNIVWTLLHIRSAAERWKAFSTCAAHLTVVSLFYGTLFFMYVQTKVTSSINFNKVVSVFYSVVTPMLNPLIYSLRNKEVKGALGRVFSLNFWKGQ.

Over 1 to 27 (MQPYTKNWTQVTEFVMMGFAGIHEAHL) the chain is Extracellular. N-linked (GlcNAc...) asparagine glycosylation occurs at Asn7. Residues 28-48 (LFFILFLTMYLFTLVENLAII) traverse the membrane as a helical segment. Over 49–56 (LVVGLDHR) the chain is Cytoplasmic. Residues 57–77 (LRRPMYFFLTHLSCLEIWYTS) traverse the membrane as a helical segment. The Extracellular portion of the chain corresponds to 78–103 (VTVPKMLAGFIGVDGGKNISYADCLS). Asn95 carries an N-linked (GlcNAc...) asparagine glycan. Residues Cys101 and Cys193 are joined by a disulfide bond. The chain crosses the membrane as a helical span at residues 104 to 124 (QLFIFTFLGATECFLLAAMAY). Residues 125–143 (DRYVAICMPLHYGAFVSWG) lie on the Cytoplasmic side of the membrane. A helical membrane pass occupies residues 144–164 (TCIRLAAACWLVGFLTPILPI). The Extracellular segment spans residues 165 to 201 (YLLSQLTFYGPNVIDHFSCDASPLLALSCSDVTWKET). A helical membrane pass occupies residues 202 to 221 (VDFLVSLAVLLASSMVIAVS). The Cytoplasmic portion of the chain corresponds to 222–241 (YGNIVWTLLHIRSAAERWKA). The chain crosses the membrane as a helical span at residues 242 to 262 (FSTCAAHLTVVSLFYGTLFFM). The Extracellular portion of the chain corresponds to 263–275 (YVQTKVTSSINFN). A helical membrane pass occupies residues 276–296 (KVVSVFYSVVTPMLNPLIYSL). Residues 297–317 (RNKEVKGALGRVFSLNFWKGQ) are Cytoplasmic-facing.

The protein belongs to the G-protein coupled receptor 1 family.

Its subcellular location is the cell membrane. Odorant receptor. This chain is Olfactory receptor 6Q1 (OR6Q1), found in Homo sapiens (Human).